Consider the following 736-residue polypeptide: Microtubule-associated protein mu-2 (736 aa).

It belongs to the orthoreovirus mu-2 protein family. Interacts with protein mu-NS; in viral inclusions. Interacts with polymerase lambda-3; this interaction stimulates the ATPase activity of mu-2. The cofactor is a divalent metal cation.

The protein resides in the virion. Its subcellular location is the host cytoplasm. The protein localises to the host cytoskeleton. Minor inner capsid (core) component. Displays NTPase and RNA 5'-triphosphatase (RTPase) activities. ATP is the preferred substrate for hydrolysis. May function as a cofactor of polymerase lambda-3. Associates with microtubules and plays a role in the formation, structural organization and morphology of viral inclusions, where the assembly of cores and the replication of viral RNA occur. Together with mu-NS, recruits the other core proteins to these inclusions. The sequence is that of Microtubule-associated protein mu-2 (M1) from Mammalia (T3D).